A 243-amino-acid chain; its full sequence is Probable fructoselysine utilization operon transcriptional repressor (243 aa).

The 69-residue stretch at 10-78 (QLLYATVRQR…QGKGTFVQSQ (69 aa)) folds into the HTH gntR-type domain. A DNA-binding region (H-T-H motif) is located at residues 38-57 (ENELCTQYNVSRITIRKAIS).

Its pathway is carbohydrate metabolism; fructoselysine degradation [regulation]. May regulate the transcription of the frlABCDR operon, involved in the utilization of fructoselysine and psicoselysine. The polypeptide is Probable fructoselysine utilization operon transcriptional repressor (frlR) (Shigella flexneri).